A 142-amino-acid polypeptide reads, in one-letter code: Large ribosomal subunit protein uL22c (142 aa).

The protein belongs to the universal ribosomal protein uL22 family. In terms of assembly, part of the 50S ribosomal subunit.

The protein localises to the plastid. It localises to the chloroplast. Functionally, this protein binds specifically to 23S rRNA. In terms of biological role, the globular domain of the protein is located near the polypeptide exit tunnel on the outside of the subunit, while an extended beta-hairpin is found that lines the wall of the exit tunnel in the center of the 70S ribosome. This chain is Large ribosomal subunit protein uL22c (rpl22), found in Oenothera parviflora (Small-flowered evening primrose).